Consider the following 184-residue polypeptide: ATP-dependent protease subunit HslV (184 aa).

T2 is an active-site residue. G157, C160, and T163 together coordinate Na(+).

Belongs to the peptidase T1B family. HslV subfamily. As to quaternary structure, a double ring-shaped homohexamer of HslV is capped on each side by a ring-shaped HslU homohexamer. The assembly of the HslU/HslV complex is dependent on binding of ATP.

It localises to the cytoplasm. It catalyses the reaction ATP-dependent cleavage of peptide bonds with broad specificity.. Allosterically activated by HslU binding. In terms of biological role, protease subunit of a proteasome-like degradation complex believed to be a general protein degrading machinery. The chain is ATP-dependent protease subunit HslV from Vibrio vulnificus (strain CMCP6).